The primary structure comprises 502 residues: Probable cytosol aminopeptidase (502 aa).

The Mn(2+) site is built by lysine 267 and aspartate 272. Lysine 279 is a catalytic residue. Residues aspartate 290, aspartate 349, and glutamate 351 each coordinate Mn(2+). Residue arginine 353 is part of the active site.

It belongs to the peptidase M17 family. The cofactor is Mn(2+).

The protein localises to the cytoplasm. The enzyme catalyses Release of an N-terminal amino acid, Xaa-|-Yaa-, in which Xaa is preferably Leu, but may be other amino acids including Pro although not Arg or Lys, and Yaa may be Pro. Amino acid amides and methyl esters are also readily hydrolyzed, but rates on arylamides are exceedingly low.. It catalyses the reaction Release of an N-terminal amino acid, preferentially leucine, but not glutamic or aspartic acids.. Functionally, presumably involved in the processing and regular turnover of intracellular proteins. Catalyzes the removal of unsubstituted N-terminal amino acids from various peptides. The chain is Probable cytosol aminopeptidase from Aeromonas hydrophila subsp. hydrophila (strain ATCC 7966 / DSM 30187 / BCRC 13018 / CCUG 14551 / JCM 1027 / KCTC 2358 / NCIMB 9240 / NCTC 8049).